Reading from the N-terminus, the 210-residue chain is dTTP/UTP pyrophosphatase (210 aa).

The span at 1 to 15 shows a compositional bias: basic and acidic residues; sequence MTHGDNRDGPGRETR. The disordered stretch occupies residues 1 to 22; that stretch reads MTHGDNRDGPGRETRSSGPLVL. The active-site Proton acceptor is the Asp-86.

This sequence belongs to the Maf family. YhdE subfamily. The cofactor is a divalent metal cation.

The protein localises to the cytoplasm. The enzyme catalyses dTTP + H2O = dTMP + diphosphate + H(+). It catalyses the reaction UTP + H2O = UMP + diphosphate + H(+). In terms of biological role, nucleoside triphosphate pyrophosphatase that hydrolyzes dTTP and UTP. May have a dual role in cell division arrest and in preventing the incorporation of modified nucleotides into cellular nucleic acids. This is dTTP/UTP pyrophosphatase from Rhodospirillum rubrum (strain ATCC 11170 / ATH 1.1.1 / DSM 467 / LMG 4362 / NCIMB 8255 / S1).